Reading from the N-terminus, the 217-residue chain is tRNA (guanine-N(7)-)-methyltransferase (217 aa).

Residues Glu43, Asp68, Asn101, and Asn123 each coordinate S-adenosyl-L-methionine. Lys127 is a binding site for substrate. Residues 129–134 (RHNKRR) are interaction with RNA. Residues Asp159 and 196–199 (TEYE) each bind substrate.

It belongs to the class I-like SAM-binding methyltransferase superfamily. TrmB family.

The enzyme catalyses guanosine(46) in tRNA + S-adenosyl-L-methionine = N(7)-methylguanosine(46) in tRNA + S-adenosyl-L-homocysteine. The protein operates within tRNA modification; N(7)-methylguanine-tRNA biosynthesis. In terms of biological role, catalyzes the formation of N(7)-methylguanine at position 46 (m7G46) in tRNA. The polypeptide is tRNA (guanine-N(7)-)-methyltransferase (Clostridium botulinum (strain Langeland / NCTC 10281 / Type F)).